An 853-amino-acid polypeptide reads, in one-letter code: Ion channel CASTOR (853 aa).

Residues 1–30 (MSLDSEVSVSSSSGRDWFFPSPSFFRSSPS) are compositionally biased toward low complexity. Residues 1–55 (MSLDSEVSVSSSSGRDWFFPSPSFFRSSPSQYGRRFHTNSNTHSAPSSTYPSGIR) are disordered. Polar residues predominate over residues 38–51 (TNSNTHSAPSSTYP). The helical transmembrane segment at 96 to 116 (QFGLQFALVTLTIVFLLLLLL) threads the bilayer. The stretch at 117-137 (RNTHLESQVNKLQGEILRLHA) forms a coiled coil. A run of 3 helical transmembrane segments spans residues 168-188 (NLAL…FKYI), 227-247 (LVLL…LFGV), and 279-299 (LVAV…LGLV). 2 consecutive RCK N-terminal domains span residues 320 to 461 (QNHT…ETVV) and 580 to 752 (PERI…DYVL).

The protein belongs to the castor/pollux (TC 1.A.1.23) family. As to quaternary structure, homooligomer. In terms of tissue distribution, expressed in infected and uninfected roots, leaves, seed pods, and flower buds.

The protein resides in the nucleus membrane. In terms of biological role, ion channel with a moderate preference for potassium over sodium and calcium. Involved in perinuclear calcium spiking but not in cytosolic calcium influx. Closed at negative voltages in presence of magnesium. Required for early signal transduction events leading to endosymbiosis. Acts early in a signal transduction chain leading from the perception of Nod factor to the activation of calcium spiking. Also involved in fungal entry into root epidermal cells during the establishment of the arbuscular mycorrhizal symbiosis. This chain is Ion channel CASTOR (CASTOR), found in Lotus japonicus (Lotus corniculatus var. japonicus).